A 418-amino-acid chain; its full sequence is Deubiquitinase and deneddylase Dub1 (418 aa).

A compositionally biased stretch (polar residues) spans 1–10 (MLSPTNSTSK). Residues 1–23 (MLSPTNSTSKKAPVPPQDSSKPV) are disordered. A helical transmembrane segment spans residues 40–60 (TALAVLLVVVTLGLILLFYSF). Positions 72–143 (TRPSTKEQPT…PPLPPKAPKP (72 aa)) are disordered. The span at 86-141 (VPLPSPPLAVPRPSTPPPPVISRPSTPPAPTPAISPPSTPSAPKPSTPPPLPPKAP) shows a compositional bias: pro residues. Active-site residues include H288, D305, and C358.

Belongs to the peptidase C48 family.

It localises to the secreted. Its subcellular location is the host cell. It is found in the membrane. Its function is as follows. Effector proteins function to alter host cell physiology and promote bacterial survival in host tissues. This protease possesses deubiquitinating and deneddylating activities. The chain is Deubiquitinase and deneddylase Dub1 (cdu1) from Chlamydia trachomatis serovar D (strain ATCC VR-885 / DSM 19411 / UW-3/Cx).